The chain runs to 1690 residues: Lysine-specific demethylase 5A (1690 aa).

The JmjN domain occupies 19 to 60 (CPVFEPSWEEFTDPLSFIGRIRPLAEKTGICKIRPPKDWQPP). The ARID domain maps to 84–174 (TRVRLDFLDQ…ILYPYELFQS (91 aa)). A Glycyl lysine isopeptide (Lys-Gly) (interchain with G-Cter in SUMO2) cross-link involves residue K191. S204 is subject to Phosphoserine. A PHD-type 1 zinc finger spans residues 293–343 (LYVCMFCGRGNNEDKLLLCDGCDDSYHTFCLIPPLPDVPKGDWRCPKCVAE). Y409 provides a ligand contact to 2-oxoglutarate. The GSGFP motif signature appears at 419 to 423 (GSGFP). Positions 437–603 (EYALSGWNLN…IGRQCVNHYR (167 aa)) constitute a JmjC domain. Residues H483 and E485 each contribute to the Fe cation site. The 2-oxoglutarate site is built by S491, N493, and K501. H571 contacts Fe cation. The C5HC2 zinc-finger motif lies at 676-728 (CSACRTTCFLSALTCSCNPERLVCLYHPTDLCPCPMQKKCLRYRYPLEDLPSL). Residue K1007 forms a Glycyl lysine isopeptide (Lys-Gly) (interchain with G-Cter in SUMO2) linkage. S1111 carries the phosphoserine modification. A PHD-type 2 zinc finger spans residues 1161–1218 (VKFCICRKTASGFMLQCELCKDWFHNSCVPLPKSSSQKKGSSWQAKEVKFLCPLCMRS). Disordered stretches follow at residues 1327–1348 (SVSS…SDED) and 1407–1433 (KSCS…LEPP). Residues S1330 and S1331 each carry the phosphoserine modification. Over residues 1337–1348 (DYDDEETDSDED) the composition is skewed to acidic residues. Residue T1343 is modified to Phosphothreonine. The residue at position 1345 (S1345) is a Phosphoserine. A phosphoserine mark is found at S1438 and S1488. Composition is skewed to basic and acidic residues over residues 1490–1503 (EEKP…DSSE) and 1520–1530 (GKQKSKELKKM). Disordered stretches follow at residues 1490-1509 (EEKP…RKRK) and 1516-1543 (LFGE…LGAD). Phosphotyrosine is present on Y1595. A phosphoserine mark is found at S1598 and S1603. Residues 1607 to 1661 (NAVCAAQNCQRPCKDKVDWVQCDGGCDEWFHQVCVGVSPEMAENEDYICINCAKK) form a PHD-type 3 zinc finger. Positions 1623-1690 (VDWVQCDGGC…LPMEDLKETS (68 aa)) are interaction with LMO2. S1666 bears the Phosphoserine mark.

Belongs to the JARID1 histone demethylase family. Interacts with SUZ12; the interaction is direct. Interacts with the viral protein-binding domain of RB1. Interacts with ESR1, MYC, MYCN and LMO2. Interacts with HDAC1; this interaction impairs histone deacetylation by HDAC1. Interacts with BMAL1 and CLOCK. Interacts (via PHD-type 1 zinc finger) with histone H3 unmodified at 'Lys-4' and (via PHD-type 3 zinc finger) with histone H3 di- and trimethylated at 'Lys-4'. Requires Fe(2+) as cofactor.

It localises to the nucleus. The protein resides in the nucleolus. The catalysed reaction is N(6),N(6),N(6)-trimethyl-L-lysyl(4)-[histone H3] + 3 2-oxoglutarate + 3 O2 = L-lysyl(4)-[histone H3] + 3 formaldehyde + 3 succinate + 3 CO2. With respect to regulation, the inhibitors KDOAM-25, CPI-455 and others inhibits its demethylase activity, resulting to cell growth arrest in cancer cells. Histone demethylase that specifically demethylates 'Lys-4' of histone H3, thereby playing a central role in histone code. Does not demethylate histone H3 'Lys-9', H3 'Lys-27', H3 'Lys-36', H3 'Lys-79' or H4 'Lys-20'. Demethylates trimethylated and dimethylated but not monomethylated H3 'Lys-4'. Regulates specific gene transcription through DNA-binding on 5'-CCGCCC-3' motif. May stimulate transcription mediated by nuclear receptors. Involved in transcriptional regulation of Hox proteins during cell differentiation. May participate in transcriptional repression of cytokines such as CXCL12. Plays a role in the regulation of the circadian rhythm and in maintaining the normal periodicity of the circadian clock. In a histone demethylase-independent manner, acts as a coactivator of the CLOCK-BMAL1-mediated transcriptional activation of PER1/2 and other clock-controlled genes and increases histone acetylation at PER1/2 promoters by inhibiting the activity of HDAC1. Seems to act as a transcriptional corepressor for some genes such as MT1F and to favor the proliferation of cancer cells. In Homo sapiens (Human), this protein is Lysine-specific demethylase 5A.